Reading from the N-terminus, the 210-residue chain is Pyridoxine/pyridoxamine 5'-phosphate oxidase (210 aa).

Substrate contacts are provided by residues 7–10 (RDEY) and K65. Residues 60 to 65 (RMVLLK), 75 to 76 (FT), R81, K82, and Q104 contribute to the FMN site. Positions 122, 126, and 130 each coordinate substrate. FMN is bound by residues 139–140 (QS) and W183. Position 189 to 191 (189 to 191 (RLH)) interacts with substrate. Position 193 (R193) interacts with FMN.

Belongs to the pyridoxamine 5'-phosphate oxidase family. In terms of assembly, homodimer. Requires FMN as cofactor.

It carries out the reaction pyridoxamine 5'-phosphate + O2 + H2O = pyridoxal 5'-phosphate + H2O2 + NH4(+). The catalysed reaction is pyridoxine 5'-phosphate + O2 = pyridoxal 5'-phosphate + H2O2. It functions in the pathway cofactor metabolism; pyridoxal 5'-phosphate salvage; pyridoxal 5'-phosphate from pyridoxamine 5'-phosphate: step 1/1. It participates in cofactor metabolism; pyridoxal 5'-phosphate salvage; pyridoxal 5'-phosphate from pyridoxine 5'-phosphate: step 1/1. Its function is as follows. Catalyzes the oxidation of either pyridoxine 5'-phosphate (PNP) or pyridoxamine 5'-phosphate (PMP) into pyridoxal 5'-phosphate (PLP). The sequence is that of Pyridoxine/pyridoxamine 5'-phosphate oxidase from Haemophilus influenzae (strain 86-028NP).